Here is a 735-residue protein sequence, read N- to C-terminus: Funoran endo-beta-hydrolase (735 aa).

The first 27 residues, 1-27 (MRVKSVYKKLSVSFILVMLSASQEVNS), serve as a signal peptide directing secretion. The Proton donor role is filled by Glu200. The Nucleophile role is filled by Glu322.

It belongs to the glycosyl hydrolase 86 family.

It catalyses the reaction Endohydrolysis of beta-(1-&gt;4)-linkages between beta-D-galactopyranose-6-sulfate and 3,6-anhydro-alpha-L-galactopyranose units in funoran.. It carries out the reaction Hydrolysis of (1-&gt;4)-beta-D-galactosidic linkages in agarose, giving the tetramer as the predominant product.. Its activity is regulated as follows. Agarase activity is enhanced in the presence of NaCl. Agarase activity is significantly inhibited by Zn(2+) and slightly activated by several divalent ions including Mg(2+), Cd(2+) and Ca(2+). Endohydrolase that cleaves the beta-1,4 glycosidic bond between beta-D-galactopyranose-6-sulfate (G6S) and 3,6-anhydro-alpha-L-galactopyranose (LA) unit of funoran, a polysaccharide produced by red algae of the genus Gloiopeltis. It releases the disaccharide LA-G6S as the predominant end product. Also acts as a random endo-acting beta-agarase, which can hydrolyze agarose tetrasaccharides and hexasaccharides, and produces disaccharides as smallest products. Besides typical agarose oligosaccharides, it can use methylated galactoses. The enzyme exhibits higher catalytic efficiency towards agarose, but binds funoran preferentially. Has no activity on porphyran. The chain is Funoran endo-beta-hydrolase from Wenyingzhuangia aestuarii.